A 374-amino-acid polypeptide reads, in one-letter code: Guanine nucleotide-binding protein subunit alpha-15 (374 aa).

The G-alpha domain occupies 41–374; sequence GELKLLLLGP…ARYLDEINLL (334 aa). The interval 44 to 57 is G1 motif; sequence KLLLLGPGESGKST. Residues 49–56, 183–189, 208–212, 277–280, and Ala346 each bind GTP; these read GPGESGKS, LRSRMPT, DVGGQ, and NKTD. Ser56 contacts Mg(2+). The G2 motif stretch occupies residues 181–189; the sequence is DVLRSRMPT. Arg186 bears the ADP-ribosylarginine; by cholera toxin mark. Position 189 (Thr189) interacts with Mg(2+). The segment at 204–213 is G3 motif; sequence LRIVDVGGQK. A G4 motif region spans residues 273–280; it reads ILFLNKTD. Positions 344-349 are G5 motif; it reads TCATDT.

Belongs to the G-alpha family. G(q) subfamily. In terms of assembly, g proteins are composed of 3 units; alpha, beta and gamma. The alpha chain contains the guanine nucleotide binding site. In terms of tissue distribution, specifically expressed in hematopoietic cells. Expressed in epididymis (at protein level).

Functionally, guanine nucleotide-binding proteins (G proteins) are involved as modulators or transducers in various transmembrane signaling systems. This chain is Guanine nucleotide-binding protein subunit alpha-15 (GNA15), found in Homo sapiens (Human).